A 95-amino-acid chain; its full sequence is Aspartyl/glutamyl-tRNA(Asn/Gln) amidotransferase subunit C (95 aa).

The protein belongs to the GatC family. Heterotrimer of A, B and C subunits.

It carries out the reaction L-glutamyl-tRNA(Gln) + L-glutamine + ATP + H2O = L-glutaminyl-tRNA(Gln) + L-glutamate + ADP + phosphate + H(+). The catalysed reaction is L-aspartyl-tRNA(Asn) + L-glutamine + ATP + H2O = L-asparaginyl-tRNA(Asn) + L-glutamate + ADP + phosphate + 2 H(+). Allows the formation of correctly charged Asn-tRNA(Asn) or Gln-tRNA(Gln) through the transamidation of misacylated Asp-tRNA(Asn) or Glu-tRNA(Gln) in organisms which lack either or both of asparaginyl-tRNA or glutaminyl-tRNA synthetases. The reaction takes place in the presence of glutamine and ATP through an activated phospho-Asp-tRNA(Asn) or phospho-Glu-tRNA(Gln). This is Aspartyl/glutamyl-tRNA(Asn/Gln) amidotransferase subunit C from Dehalococcoides mccartyi (strain CBDB1).